The sequence spans 192 residues: Fibroblast growth factor 4B (192 aa).

The N-terminal stretch at 1–22 (MTVQLALVPILLLGTAAVMVHC) is a signal peptide.

The protein belongs to the heparin-binding growth factors family.

The protein localises to the secreted. Functionally, plays an important role in the regulation of embryonic development, cell proliferation, and cell differentiation. Good candidate for an inducing factor with possible roles both in mesoderm induction at the blastula stage and in the formation of the anteroposterior axis at the gastrula stage. This chain is Fibroblast growth factor 4B (fgf4-b), found in Xenopus laevis (African clawed frog).